Reading from the N-terminus, the 152-residue chain is UPF0178 protein YaiI (152 aa).

This sequence belongs to the UPF0178 family.

In Shigella boydii serotype 18 (strain CDC 3083-94 / BS512), this protein is UPF0178 protein YaiI.